Reading from the N-terminus, the 257-residue chain is Snake venom serine protease 3 (257 aa).

The signal sequence occupies residues 1–18 (MVLIRVLANLLILQLSYA). A propeptide spanning residues 19–24 (QKSSEL) is cleaved from the precursor. The Peptidase S1 domain occupies 25-248 (VIGGDECNIN…YTDWIQNIIA (224 aa)). Intrachain disulfides connect Cys31–Cys163, Cys50–Cys66, Cys98–Cys255, Cys142–Cys209, Cys174–Cys188, and Cys199–Cys224. N-linked (GlcNAc...) asparagine glycosylation occurs at Asn44. The active-site Charge relay system is the His65. Asn103 carries N-linked (GlcNAc...) asparagine glycosylation. Residue Asp110 is the Charge relay system of the active site. Asn117 and Asn154 each carry an N-linked (GlcNAc...) asparagine glycan. Ser203 acts as the Charge relay system in catalysis. Asn250 carries N-linked (GlcNAc...) asparagine glycosylation.

It belongs to the peptidase S1 family. Snake venom subfamily. In terms of assembly, monomer. In terms of tissue distribution, expressed by the venom gland.

Its subcellular location is the secreted. Its function is as follows. Snake venom serine protease that may act in the hemostasis system of the prey. This is Snake venom serine protease 3 (TLF3) from Protobothrops flavoviridis (Habu).